The following is a 272-amino-acid chain: 5'-AMP-activated protein kinase subunit beta-2 (272 aa).

The segment at M1 to K52 is disordered. S39 carries the phosphoserine modification. T40 carries the phosphothreonine modification. S69 is subject to Phosphoserine; by ULK1. Phosphoserine occurs at positions 95 and 108. Phosphothreonine is present on T148. 4 positions are modified to phosphoserine: S158, S170, S174, and S184.

Belongs to the 5'-AMP-activated protein kinase beta subunit family. As to quaternary structure, AMPK is a heterotrimer of an alpha catalytic subunit (PRKAA1 or PRKAA2), a beta (PRKAB1 or PRKAB2) and a gamma non-catalytic subunits (PRKAG1, PRKAG2 or PRKAG3). Post-translationally, phosphorylated when associated with the catalytic subunit (PRKAA1 or PRKAA2). Phosphorylated by ULK1 and ULK2; leading to negatively regulate AMPK activity and suggesting the existence of a regulatory feedback loop between ULK1, ULK2 and AMPK.

Its function is as follows. Non-catalytic subunit of AMP-activated protein kinase (AMPK), an energy sensor protein kinase that plays a key role in regulating cellular energy metabolism. In response to reduction of intracellular ATP levels, AMPK activates energy-producing pathways and inhibits energy-consuming processes: inhibits protein, carbohydrate and lipid biosynthesis, as well as cell growth and proliferation. AMPK acts via direct phosphorylation of metabolic enzymes, and by longer-term effects via phosphorylation of transcription regulators. Also acts as a regulator of cellular polarity by remodeling the actin cytoskeleton; probably by indirectly activating myosin. Beta non-catalytic subunit acts as a scaffold on which the AMPK complex assembles, via its C-terminus that bridges alpha (PRKAA1 or PRKAA2) and gamma subunits (PRKAG1, PRKAG2 or PRKAG3). In Homo sapiens (Human), this protein is 5'-AMP-activated protein kinase subunit beta-2 (PRKAB2).